We begin with the raw amino-acid sequence, 253 residues long: tRNA pseudouridine synthase A (253 aa).

The active-site Nucleophile is the Asp53. A substrate-binding site is contributed by Tyr111.

The protein belongs to the tRNA pseudouridine synthase TruA family. Homodimer.

The catalysed reaction is uridine(38/39/40) in tRNA = pseudouridine(38/39/40) in tRNA. Functionally, formation of pseudouridine at positions 38, 39 and 40 in the anticodon stem and loop of transfer RNAs. The protein is tRNA pseudouridine synthase A of Chlorobium luteolum (strain DSM 273 / BCRC 81028 / 2530) (Pelodictyon luteolum).